The primary structure comprises 343 residues: MDSPSLLEVLQVQQVEKLISPSLRFILAYFTHRYPRFLLRAYNSFDGIYLLVKLLLEKSQLKKWNATSVERRFQLKRVIAVRDSSIIAEEFPQESESATSLNGIDVLKKLFLTYCIPYLLEKCESLTTVKENHTAVSILSLQARDKQKGALSVFYSKIKILLVRLKKILHFVFRLIRKSNTYLQWLYYLLYALGKTPYTNLADHILRQRVIYNVENIHSRKLISTREKSSLLTSIADHSMEGFLIIIQLIDWWQSNNYESHLKKGEVAFTELAPPKLPFEINVSTTDICKICGEKIKNPAVLSTGFVFCYPCIQVWLQRHPFKCPVTNLELSRKGESFWRLMI.

Topologically, residues 1–5 (MDSPS) are peroxisomal matrix. A helical membrane pass occupies residues 6–33 (LLEVLQVQQVEKLISPSLRFILAYFTHR). Over 34–37 (YPRF) the chain is Cytoplasmic. A helical membrane pass occupies residues 38–62 (LLRAYNSFDGIYLLVKLLLEKSQLK). Over 63-102 (KWNATSVERRFQLKRVIAVRDSSIIAEEFPQESESATSLN) the chain is Peroxisomal matrix. The helical transmembrane segment at 103 to 140 (GIDVLKKLFLTYCIPYLLEKCESLTTVKENHTAVSILS) threads the bilayer. The Cytoplasmic segment spans residues 141–146 (LQARDK). A helical transmembrane segment spans residues 147–193 (QKGALSVFYSKIKILLVRLKKILHFVFRLIRKSNTYLQWLYYLLYAL). Over 194-238 (GKTPYTNLADHILRQRVIYNVENIHSRKLISTREKSSLLTSIADH) the chain is Peroxisomal matrix. A helical membrane pass occupies residues 239–266 (SMEGFLIIIQLIDWWQSNNYESHLKKGE). Topologically, residues 267–343 (VAFTELAPPK…KGESFWRLMI (77 aa)) are cytoplasmic. Zn(2+) contacts are provided by cysteine 289, cysteine 292, cysteine 309, and cysteine 312. The RING-type; degenerate zinc-finger motif lies at 289–328 (CKICGEKIKNPAVLSTGFVFCYPCIQVWLQRHPFKCPVTN).

The protein belongs to the pex2/pex10/pex12 family. In terms of assembly, component of the PEX2-PEX10-PEX12 retrotranslocation channel, composed of PEX2, PEX10 and PEX12.

Its subcellular location is the peroxisome membrane. It participates in protein modification; protein ubiquitination. Functionally, component of a retrotranslocation channel required for peroxisome organization by mediating export of the PEX5 receptor from peroxisomes to the cytosol, thereby promoting PEX5 recycling. The retrotranslocation channel is composed of PEX2, PEX10 and PEX12; each subunit contributing transmembrane segments that coassemble into an open channel that specifically allows the passage of PEX5 through the peroxisomal membrane. PEX12 also regulates PEX5 recycling by activating the E3 ubiquitin-protein ligase activity of PEX10. When PEX5 recycling is compromised, PEX12 stimulates PEX10-mediated polyubiquitination of PEX5, leading to its subsequent degradation. The polypeptide is Peroxisome assembly protein 12 (pex12) (Schizosaccharomyces pombe (strain 972 / ATCC 24843) (Fission yeast)).